Consider the following 137-residue polypeptide: Large-conductance mechanosensitive channel (137 aa).

The next 2 helical transmembrane spans lie at 15–35 (VDLA…TSLV) and 81–101 (GKFI…FFVI).

This sequence belongs to the MscL family. In terms of assembly, homopentamer.

It is found in the cell inner membrane. Functionally, channel that opens in response to stretch forces in the membrane lipid bilayer. May participate in the regulation of osmotic pressure changes within the cell. The polypeptide is Large-conductance mechanosensitive channel (Hyphomonas neptunium (strain ATCC 15444)).